The sequence spans 346 residues: Aspartate-semialdehyde dehydrogenase (346 aa).

NADP(+)-binding positions include 13–16 (TGAV) and 41–42 (RS). Position 98 is a phosphoserine (Ser-98). Arg-101 is a phosphate binding site. Cys-130 serves as the catalytic Acyl-thioester intermediate. The residue at position 146 (Tyr-146) is a Phosphotyrosine. Gln-157 serves as a coordination point for substrate. 160-161 (SG) provides a ligand contact to NADP(+). Lys-221 is a phosphate binding site. Substrate is bound at residue Arg-243. His-250 acts as the Proton acceptor in catalysis. Asn-324 is an NADP(+) binding site.

It belongs to the aspartate-semialdehyde dehydrogenase family. Homodimer.

It catalyses the reaction L-aspartate 4-semialdehyde + phosphate + NADP(+) = 4-phospho-L-aspartate + NADPH + H(+). Its pathway is amino-acid biosynthesis; L-lysine biosynthesis via DAP pathway; (S)-tetrahydrodipicolinate from L-aspartate: step 2/4. The protein operates within amino-acid biosynthesis; L-methionine biosynthesis via de novo pathway; L-homoserine from L-aspartate: step 2/3. It participates in amino-acid biosynthesis; L-threonine biosynthesis; L-threonine from L-aspartate: step 2/5. In terms of biological role, catalyzes the NADPH-dependent formation of L-aspartate-semialdehyde (L-ASA) by the reductive dephosphorylation of L-aspartyl-4-phosphate. The chain is Aspartate-semialdehyde dehydrogenase from Bacillus subtilis (strain 168).